Consider the following 172-residue polypeptide: MERAIQGNDAREQAYGERWNGGPGGSTSPFQLPDESPSWTEWRLHNDETNSNQDNPLGFKESWGFGKVVFKRYLRYERTETSLHRVLGSWTGDSVNYAASRFLGFDQIGCTYSIRFRGVSVTISGGSRTLQHLSEMAIRSKQELLQLTPVKVESNVSRGRPEGVETFKEESE.

Over residues 1–15 (MERAIQGNDAREQAY) the composition is skewed to basic and acidic residues. The segment at 1-38 (MERAIQGNDAREQAYGERWNGGPGGSTSPFQLPDESPS) is disordered.

Belongs to the tombusvirus protein p19 family. Homodimer.

Functionally, viral suppressor of RNA silencing which binds specifically to silencing RNAs (siRNAs). Acts as a molecular caliper to specifically select siRNAs based on the length of the duplex region of the RNA. The sequence is that of RNA silencing suppressor p19 from Tomato bushy stunt virus (strain A23) (TBSV).